The chain runs to 254 residues: Pyruvate dehydrogenase complex repressor (254 aa).

The HTH gntR-type domain occupies Pro9–Ser77. The H-T-H motif DNA-binding region spans Glu37–Gln56.

Transcriptional repressor for the pyruvate dehydrogenase complex genes aceEF and lpd. The sequence is that of Pyruvate dehydrogenase complex repressor (pdhR) from Escherichia coli O6:H1 (strain CFT073 / ATCC 700928 / UPEC).